A 66-amino-acid chain; its full sequence is Large ribosomal subunit protein bL31 (66 aa).

The Zn(2+) site is built by Cys-16, Cys-18, Cys-36, and Cys-39.

The protein belongs to the bacterial ribosomal protein bL31 family. Type A subfamily. Part of the 50S ribosomal subunit. Zn(2+) serves as cofactor.

In terms of biological role, binds the 23S rRNA. The protein is Large ribosomal subunit protein bL31 of Leptospira biflexa serovar Patoc (strain Patoc 1 / Ames).